A 601-amino-acid polypeptide reads, in one-letter code: Elongation factor 4 (601 aa).

In terms of domain architecture, tr-type G spans 6 to 188 (SRTRNFSIIA…DIVKNVPPPK (183 aa)). GTP is bound by residues 18 to 23 (DHGKST) and 135 to 138 (NKID).

The protein belongs to the TRAFAC class translation factor GTPase superfamily. Classic translation factor GTPase family. LepA subfamily.

Its subcellular location is the cell membrane. It carries out the reaction GTP + H2O = GDP + phosphate + H(+). Functionally, required for accurate and efficient protein synthesis under certain stress conditions. May act as a fidelity factor of the translation reaction, by catalyzing a one-codon backward translocation of tRNAs on improperly translocated ribosomes. Back-translocation proceeds from a post-translocation (POST) complex to a pre-translocation (PRE) complex, thus giving elongation factor G a second chance to translocate the tRNAs correctly. Binds to ribosomes in a GTP-dependent manner. This is Elongation factor 4 from Clostridioides difficile (strain 630) (Peptoclostridium difficile).